Consider the following 87-residue polypeptide: U3-theraphotoxin-Hhn1a 2 (87 aa).

Residues M1–A24 form the signal peptide. A propeptide spanning residues S25–R52 is cleaved from the precursor. Intrachain disulfides connect C54–C67, C61–C72, and C66–C79.

It belongs to the neurotoxin 10 (Hwtx-1) family. 51 (Hntx-8) subfamily. Hntx-8 sub-subfamily. Expressed by the venom gland.

It is found in the secreted. Functionally, ion channel inhibitor. In Cyriopagopus hainanus (Chinese bird spider), this protein is U3-theraphotoxin-Hhn1a 2.